A 2694-amino-acid chain; its full sequence is Teneurin-3 (2694 aa).

Disordered stretches follow at residues 1-45, 106-132, and 161-198; these read MDVK…SSSE, PSSL…DNQS, and TQPA…PSVT. A Teneurin N-terminal domain is found at 1–306; sequence MDVKERRPYC…KSSKYCSWRC (306 aa). Topologically, residues 1–312 are cytoplasmic; the sequence is MDVKERRPYC…SWRCTALSAM (312 aa). Over residues 163 to 184 the composition is skewed to polar residues; the sequence is PAPSHSCNEQPSNQHQQGQSTL. Residues 313 to 333 form a helical membrane-spanning segment; the sequence is AVSILLSVLLCYCIAMHLFGL. The Extracellular segment spans residues 334-2694; sequence NWQLQETEGY…FLRQSEIGKR (2361 aa). 2 N-linked (GlcNAc...) asparagine glycosylation sites follow: Asn-374 and Asn-413. EGF-like domains follow at residues 508–539, 540–570, 572–604, 605–636, 638–671, 672–703, 704–733, and 734–768; these read TLTE…PDCS, RAAC…TECD, PSNQ…DNCE, EVDC…NNCE, LKTM…PDCS, IEVC…VCDL, KACH…EHCT, and VEGC…AGCD. Cystine bridges form between Cys-512/Cys-522, Cys-516/Cys-527, Cys-529/Cys-538, Cys-547/Cys-558, Cys-560/Cys-569, Cys-576/Cys-587, Cys-581/Cys-592, Cys-594/Cys-603, Cys-608/Cys-619, Cys-613/Cys-624, Cys-626/Cys-635, Cys-646/Cys-659, Cys-661/Cys-670, Cys-675/Cys-685, Cys-679/Cys-690, Cys-692/Cys-701, Cys-706/Cys-716, Cys-710/Cys-721, Cys-723/Cys-732, Cys-737/Cys-747, Cys-741/Cys-756, and Cys-758/Cys-767. A glycan (N-linked (GlcNAc...) asparagine) is linked at Asn-664. Asn-854, Asn-877, and Asn-1048 each carry an N-linked (GlcNAc...) asparagine glycan. NHL repeat units lie at residues 1166–1192, 1194–1238, 1264–1308, 1325–1365, and 1452–1495; these read LLAP…RRIF, SGNV…PKAL, ARCG…NGII, CDNS…ITEN, and CYQT…IRHN. N-linked (GlcNAc...) asparagine glycosylation is present at Asn-1196. One copy of the YD 1 repeat lies at 1505 to 1524; that stretch reads FEVASPASQELYVFDSNGTH. Residues Asn-1521 and Asn-1538 are each glycosylated (N-linked (GlcNAc...) asparagine). 3 YD repeats span residues 1541–1561, 1604–1623, and 1624–1646; these read YSNE…LRVR, YHGN…WTTF, and YDYD…TSLI. N-linked (GlcNAc...) asparagine glycosylation is found at Asn-1634, Asn-1671, Asn-1729, and Asn-1814. YD repeat units lie at residues 1817 to 1836, 1858 to 1876, 1877 to 1897, 1904 to 1921, 1922 to 1943, 1944 to 1961, 1964 to 1984, 1987 to 2007, 2015 to 2034, 2040 to 2057, 2058 to 2084, 2086 to 2099, 2100 to 2123, 2126 to 2146, 2147 to 2167, 2169 to 2189, 2201 to 2221, and 2223 to 2243; these read YSST…ERVE, YLDK…YIFD, YDLQ…HTMQ, YYRN…VTVD, YSED…VLYK, YRRQ…TRVS, YDET…FICS, YRQI…DGMV, YDNS…TPLP, FDDI…GVIY, YDIN…IKEI, YEIF…ITIQ, YDNM…TKYG, YDVD…WRYN, YDLN…LTPL, YDLR…DEDG, YNSK…TIQY, and YDGL…LQFF. Asn-1915 carries an N-linked (GlcNAc...) asparagine glycan. Asn-2118 carries an N-linked (GlcNAc...) asparagine glycan. An N-linked (GlcNAc...) asparagine glycan is attached at Asn-2258. The stretch at 2269–2310 is one YD 23 repeat; sequence YDLQGHLFAMEISSGEEFYIACDNTGTPLAVFSSNGLLLKQV. The N-linked (GlcNAc...) asparagine glycan is linked to Asn-2571.

It belongs to the tenascin family. Teneurin subfamily. Homodimer; disulfide-linked; to mediate homophilic cell adhesion. As to expression, expressed by retinal ganglion cells and their presynaptic amacrine and postsynaptic tectal cell targets.

The protein localises to the cell membrane. It is found in the cell projection. The protein resides in the axon. Involved in neural development by regulating the establishment of proper connectivity within the nervous system. Acts in both pre- and postsynaptic neurons in the hippocampus to control the assembly of a precise topographic projection: required in both CA1 and subicular neurons for the precise targeting of proximal CA1 axons to distal subiculum, probably by promoting homophilic cell adhesion. Required by retinal ganglion cells for acquisition of their correct morphological and functional connectivity, thereby playing a key role in the development of the visual pathway. This Danio rerio (Zebrafish) protein is Teneurin-3 (tenm3).